Consider the following 208-residue polypeptide: MTIQTFKSTDFDVFTVDGLEERMSAIKTNIHPKLEALGEQFAEYLSKQTDENFFYHVAKHARRKVNPPNDTWVAFSTNKRGYKMLPHFQIGLWGTHAFIYFGLIYECPQKVETAHAFLEHLNDLKTNIPNDFVWSIDHTKPSVKLHKTLETEDLQKMIERLATVKKAELLVGIHISPEEFSAMTNEQFLAKIESTMQSLLPLYALCNR.

The protein belongs to the UPF0637 family.

This is UPF0637 protein BCB4264_A4063 from Bacillus cereus (strain B4264).